Reading from the N-terminus, the 665-residue chain is Probable potassium transport system protein Kup (665 aa).

Residues 1-18 (MASEAPHASAPDCAPASS) show a composition bias toward low complexity. Positions 1 to 31 (MASEAPHASAPDCAPASSDIPQQDGGSTNGH) are disordered. Transmembrane regions (helical) follow at residues 40–60 (FFALALGSVGVVFGDIGTSPL), 83–103 (VVSLALWALILIVTIKYVVFI), 131–151 (LVFVLGVAGAALFYGDAVITP), 171–191 (GVTNEVVLLIATVMLLGLFFI), 202–222 (LFGPVCAVWFGVMFSLGLMNL), 245–265 (GLTGFIVLGAVFLTVTGVEAL), 281–301 (WLFFVLPCLAMNYLGQGAFAL), 332–352 (LVLLAGAATVIASQAVITGAF), 380–400 (IFVPQLNTMLLLGVLAIMFTF), 409–429 (AYGLAVTGTMIVTTCMAFIVM), 435–455 (WSMPMALLFLVPFLALDITFL), and 462–482 (FFSGGWLPVLIGAALFTIMAT).

This sequence belongs to the HAK/KUP transporter (TC 2.A.72) family.

It is found in the cell inner membrane. It catalyses the reaction K(+)(in) + H(+)(in) = K(+)(out) + H(+)(out). Its function is as follows. Transport of potassium into the cell. Likely operates as a K(+):H(+) symporter. This is Probable potassium transport system protein Kup from Caulobacter vibrioides (strain ATCC 19089 / CIP 103742 / CB 15) (Caulobacter crescentus).